The primary structure comprises 318 residues: Nitrate reductase [NADH] (318 aa).

Positions 216–291 (AKSFTMAEVE…LLEYYIGELA (76 aa)) constitute a Cytochrome b5 heme-binding domain. 2 residues coordinate heme: His-251 and His-274.

The protein belongs to the nitrate reductase family. As to quaternary structure, homodimer. FAD serves as cofactor. The cofactor is heme. It depends on Mo-molybdopterin as a cofactor.

It carries out the reaction nitrite + NAD(+) + H2O = nitrate + NADH + H(+). Its function is as follows. Nitrate reductase is a key enzyme involved in the first step of nitrate assimilation in plants, fungi and bacteria. The chain is Nitrate reductase [NADH] from Chlorella vulgaris (Green alga).